The primary structure comprises 209 residues: Octanoyltransferase (209 aa).

The BPL/LPL catalytic domain maps to E29–S209. Residues R71–H78, S138–G140, and G151–A153 each bind substrate. Residue C169 is the Acyl-thioester intermediate of the active site.

The protein belongs to the LipB family.

It localises to the cytoplasm. It catalyses the reaction octanoyl-[ACP] + L-lysyl-[protein] = N(6)-octanoyl-L-lysyl-[protein] + holo-[ACP] + H(+). It participates in protein modification; protein lipoylation via endogenous pathway; protein N(6)-(lipoyl)lysine from octanoyl-[acyl-carrier-protein]: step 1/2. Catalyzes the transfer of endogenously produced octanoic acid from octanoyl-acyl-carrier-protein onto the lipoyl domains of lipoate-dependent enzymes. Lipoyl-ACP can also act as a substrate although octanoyl-ACP is likely to be the physiological substrate. The protein is Octanoyltransferase of Hydrogenovibrio crunogenus (strain DSM 25203 / XCL-2) (Thiomicrospira crunogena).